A 155-amino-acid chain; its full sequence is Endoribonuclease YbeY (155 aa).

The Zn(2+) site is built by His120, His124, and His130.

The protein belongs to the endoribonuclease YbeY family. It depends on Zn(2+) as a cofactor.

It localises to the cytoplasm. Single strand-specific metallo-endoribonuclease involved in late-stage 70S ribosome quality control and in maturation of the 3' terminus of the 16S rRNA. The protein is Endoribonuclease YbeY of Borreliella burgdorferi (strain ATCC 35210 / DSM 4680 / CIP 102532 / B31) (Borrelia burgdorferi).